We begin with the raw amino-acid sequence, 241 residues long: Uridylate kinase (241 aa).

An ATP-binding site is contributed by 15-18; the sequence is KISG. Residues 23-28 are involved in allosteric activation by GTP; the sequence is GDQGFG. A UMP-binding site is contributed by Gly-57. Gly-58 and Arg-62 together coordinate ATP. UMP-binding positions include Asp-77 and 138-145; that span reads TGNPYFTT. 3 residues coordinate ATP: Thr-165, Tyr-171, and Asp-174.

The protein belongs to the UMP kinase family. Homohexamer.

It is found in the cytoplasm. The enzyme catalyses UMP + ATP = UDP + ADP. Its pathway is pyrimidine metabolism; CTP biosynthesis via de novo pathway; UDP from UMP (UMPK route): step 1/1. Its activity is regulated as follows. Allosterically activated by GTP. Inhibited by UTP. Catalyzes the reversible phosphorylation of UMP to UDP. The chain is Uridylate kinase from Paracoccus zeaxanthinifaciens.